Reading from the N-terminus, the 105-residue chain is UPF0235 protein RPR_04990 (105 aa).

This sequence belongs to the UPF0235 family.

The sequence is that of UPF0235 protein RPR_04990 from Rickettsia peacockii (strain Rustic).